Consider the following 304-residue polypeptide: Glutaminase (304 aa).

Positions 63, 113, 157, 164, 188, 240, and 258 each coordinate substrate.

Belongs to the glutaminase family. As to quaternary structure, homotetramer.

The catalysed reaction is L-glutamine + H2O = L-glutamate + NH4(+). This chain is Glutaminase, found in Chromobacterium violaceum (strain ATCC 12472 / DSM 30191 / JCM 1249 / CCUG 213 / NBRC 12614 / NCIMB 9131 / NCTC 9757 / MK).